The primary structure comprises 419 residues: Putative zinc metalloprotease SP_0263 (419 aa).

Position 18 (histidine 18) interacts with Zn(2+). Glutamate 19 is a catalytic residue. Histidine 22 provides a ligand contact to Zn(2+). A run of 3 helical transmembrane segments spans residues 169–191 (LITN…WVLI), 345–367 (ILYF…IPAL), and 388–410 (EIET…AVTW).

This sequence belongs to the peptidase M50B family. Requires Zn(2+) as cofactor.

The protein resides in the cell membrane. This Streptococcus pneumoniae serotype 4 (strain ATCC BAA-334 / TIGR4) protein is Putative zinc metalloprotease SP_0263.